The chain runs to 926 residues: Protein translocase subunit SecA (926 aa).

ATP contacts are provided by residues Gln-87, 105–109, and Asp-512; that span reads GEGKT. Positions 911, 913, 922, and 923 each coordinate Zn(2+).

This sequence belongs to the SecA family. Monomer and homodimer. Part of the essential Sec protein translocation apparatus which comprises SecA, SecYEG and auxiliary proteins SecDF-YajC and YidC. Zn(2+) serves as cofactor.

The protein localises to the cell inner membrane. Its subcellular location is the cytoplasm. It carries out the reaction ATP + H2O + cellular proteinSide 1 = ADP + phosphate + cellular proteinSide 2.. Functionally, part of the Sec protein translocase complex. Interacts with the SecYEG preprotein conducting channel. Has a central role in coupling the hydrolysis of ATP to the transfer of proteins into and across the cell membrane, serving both as a receptor for the preprotein-SecB complex and as an ATP-driven molecular motor driving the stepwise translocation of polypeptide chains across the membrane. This Psychrobacter cryohalolentis (strain ATCC BAA-1226 / DSM 17306 / VKM B-2378 / K5) protein is Protein translocase subunit SecA.